The primary structure comprises 225 residues: NAD(P)H-quinone oxidoreductase subunit K, chloroplastic (225 aa).

[4Fe-4S] cluster-binding residues include Cys43, Cys44, Cys108, and Cys139.

The protein belongs to the complex I 20 kDa subunit family. As to quaternary structure, NDH is composed of at least 16 different subunits, 5 of which are encoded in the nucleus. It depends on [4Fe-4S] cluster as a cofactor.

The protein localises to the plastid. It is found in the chloroplast thylakoid membrane. It catalyses the reaction a plastoquinone + NADH + (n+1) H(+)(in) = a plastoquinol + NAD(+) + n H(+)(out). The catalysed reaction is a plastoquinone + NADPH + (n+1) H(+)(in) = a plastoquinol + NADP(+) + n H(+)(out). Its function is as follows. NDH shuttles electrons from NAD(P)H:plastoquinone, via FMN and iron-sulfur (Fe-S) centers, to quinones in the photosynthetic chain and possibly in a chloroplast respiratory chain. The immediate electron acceptor for the enzyme in this species is believed to be plastoquinone. Couples the redox reaction to proton translocation, and thus conserves the redox energy in a proton gradient. The chain is NAD(P)H-quinone oxidoreductase subunit K, chloroplastic from Hordeum vulgare (Barley).